A 137-amino-acid chain; its full sequence is MVVVNAENAVVGRLASYVAKLALSGEEITVVNAEKAIMTGNKEYIFQKYVQLRTRKSISNPKKMGPKYPRRPDDIVRRVIRGMLPYKKPRGVEAFKKIKIEVGVPEGVSIDINLGSAPNTIKYVTVGELSQFLGAKF.

Belongs to the universal ribosomal protein uL13 family. Part of the 50S ribosomal subunit.

In terms of biological role, this protein is one of the early assembly proteins of the 50S ribosomal subunit, although it is not seen to bind rRNA by itself. It is important during the early stages of 50S assembly. The polypeptide is Large ribosomal subunit protein uL13 (Methanococcus maripaludis (strain DSM 14266 / JCM 13030 / NBRC 101832 / S2 / LL)).